Consider the following 333-residue polypeptide: Glyceraldehyde-3-phosphate dehydrogenase (333 aa).

NAD(+) is bound by residues 11-12 (RI), Asp33, Arg78, and Ser120. D-glyceraldehyde 3-phosphate is bound by residues 149-151 (SCT), Thr180, 209-210 (TG), and Arg232. Cys150 (nucleophile) is an active-site residue. Residue Cys150 is modified to S-nitrosocysteine. Asn314 serves as a coordination point for NAD(+).

It belongs to the glyceraldehyde-3-phosphate dehydrogenase family. Homotetramer. In terms of processing, S-nitrosylation of Cys-150 leads to translocation to the nucleus.

It localises to the cytoplasm. It is found in the cytosol. Its subcellular location is the cytoskeleton. The protein localises to the nucleus. It catalyses the reaction D-glyceraldehyde 3-phosphate + phosphate + NAD(+) = (2R)-3-phospho-glyceroyl phosphate + NADH + H(+). It carries out the reaction S-nitroso-L-cysteinyl-[GAPDH] + L-cysteinyl-[protein] = L-cysteinyl-[GAPDH] + S-nitroso-L-cysteinyl-[protein]. It functions in the pathway carbohydrate degradation; glycolysis; pyruvate from D-glyceraldehyde 3-phosphate: step 1/5. Its function is as follows. Has both glyceraldehyde-3-phosphate dehydrogenase and nitrosylase activities, thereby playing a role in glycolysis and nuclear functions, respectively. Glyceraldehyde-3-phosphate dehydrogenase is a key enzyme in glycolysis that catalyzes the first step of the pathway by converting D-glyceraldehyde 3-phosphate (G3P) into 3-phospho-D-glyceroyl phosphate. Participates in nuclear events including transcription, RNA transport, DNA replication and apoptosis. Nuclear functions are probably due to the nitrosylase activity that mediates cysteine S-nitrosylation of nuclear target proteins such as SIRT1, HDAC2 and PRKDC. This chain is Glyceraldehyde-3-phosphate dehydrogenase, found in Danio rerio (Zebrafish).